The chain runs to 239 residues: Myogenic factor 6 (239 aa).

Residues 28–59 (PGVSPLYEGNDSPLSPGQDPVPSETGCESSGE) are disordered. One can recognise a bHLH domain in the interval 92 to 143 (DRRKAATLRERRRLKKINEAFDALKKKTVPNPNQRLPKVEILRSAINYIEKL). The span at 182-196 (CQSWQENPDHSSSQM) shows a compositional bias: polar residues. Residues 182–239 (CQSWQENPDHSSSQMAGHREGAVLESSESSSLRRLSSIVDSISTEEPKARCPSQISEK) form a disordered region. Residues 204-223 (VLESSESSSLRRLSSIVDSI) show a composition bias toward low complexity.

Efficient DNA binding requires dimerization with another bHLH protein.

The protein resides in the nucleus. In terms of biological role, involved in muscle differentiation (myogenic factor). Induces fibroblasts to differentiate into myoblasts. Probable sequence specific DNA-binding protein. The sequence is that of Myogenic factor 6 (myf6) from Danio rerio (Zebrafish).